Consider the following 287-residue polypeptide: CRISPR-associated endoribonuclease Cas6 1 (287 aa).

Belongs to the CRISPR-associated endoribonuclease Cas6 family. In terms of assembly, part of the aCascade ribonucleoprotein complex, minimally composed of Csa2 and Cas5a, which binds crRNA. Other possible components of aCascade in strain P1 are Cas6b (SSO1437) and Csa5 (SSO1443), while SSO1399, Cas5b (SSO1400) and SSO1401 have sometimes been seen weakly associated. Csa2 is probably the major RNA-binding subunit. The Csa2-Cas5a-crRNA complex also binds target DNA homologous to crRNA, probably forming an R-loop. Purified aCascade forms a filament about 6 nm in width.

Functionally, CRISPR (clustered regularly interspaced short palindromic repeat) is an adaptive immune system that provides protection against mobile genetic elements (viruses, transposable elements and conjugative plasmids). CRISPR clusters contain spacers, sequences complementary to antecedent mobile elements, and target invading nucleic acids. CRISPR clusters are transcribed and processed into CRISPR RNA (crRNA). The polypeptide is CRISPR-associated endoribonuclease Cas6 1 (cas6a) (Saccharolobus solfataricus (strain ATCC 35092 / DSM 1617 / JCM 11322 / P2) (Sulfolobus solfataricus)).